The following is a 190-amino-acid chain: Imidazoleglycerol-phosphate dehydratase (190 aa).

It belongs to the imidazoleglycerol-phosphate dehydratase family.

Its subcellular location is the cytoplasm. It carries out the reaction D-erythro-1-(imidazol-4-yl)glycerol 3-phosphate = 3-(imidazol-4-yl)-2-oxopropyl phosphate + H2O. The protein operates within amino-acid biosynthesis; L-histidine biosynthesis; L-histidine from 5-phospho-alpha-D-ribose 1-diphosphate: step 6/9. The polypeptide is Imidazoleglycerol-phosphate dehydratase (Methanococcus vannielii (strain ATCC 35089 / DSM 1224 / JCM 13029 / OCM 148 / SB)).